The sequence spans 100 residues: Urease subunit gamma (100 aa).

The protein belongs to the urease gamma subunit family. Heterotrimer of UreA (gamma), UreB (beta) and UreC (alpha) subunits. Three heterotrimers associate to form the active enzyme.

It localises to the cytoplasm. The catalysed reaction is urea + 2 H2O + H(+) = hydrogencarbonate + 2 NH4(+). The protein operates within nitrogen metabolism; urea degradation; CO(2) and NH(3) from urea (urease route): step 1/1. This chain is Urease subunit gamma, found in Pseudomonas fluorescens (strain Pf0-1).